The chain runs to 567 residues: Arginine--tRNA ligase (567 aa).

The 'HIGH' region motif lies at 128 to 138 (ANPTGPLHVGH).

It belongs to the class-I aminoacyl-tRNA synthetase family. In terms of assembly, monomer.

It localises to the cytoplasm. The enzyme catalyses tRNA(Arg) + L-arginine + ATP = L-arginyl-tRNA(Arg) + AMP + diphosphate. The polypeptide is Arginine--tRNA ligase (Acidovorax ebreus (strain TPSY) (Diaphorobacter sp. (strain TPSY))).